A 1352-amino-acid chain; its full sequence is Spike glycoprotein (1352 aa).

Residues 1-12 form the signal peptide; sequence MIRSVLVLMCSL. At 13–1297 the chain is on the extracellular side; it reads TFIGNLTRGQ…GNYTFYQKWP (1285 aa). Positions 22-359 constitute a BetaCoV S1-NTD domain; that stretch reads QSVDMGHNGT…DDLAQLQCSY (338 aa). Asparagine 29, asparagine 73, asparagine 111, asparagine 132, asparagine 167, asparagine 174, asparagine 244, and asparagine 250 each carry an N-linked (GlcNAc...) asparagine; by host glycan. A disulfide bridge links cysteine 193 with cysteine 245. 2 disulfides stabilise this stretch: cysteine 347–cysteine 357 and cysteine 391–cysteine 415. Residues 389–585 form the BetaCoV S1-CTD domain; the sequence is QECDFTPMLT…GTDTNSVCPM (197 aa). Asparagine 418 carries N-linked (GlcNAc...) asparagine; by host glycosylation. Disulfide bonds link cysteine 433-cysteine 486 and cysteine 445-cysteine 583. Residues asparagine 495, asparagine 590, asparagine 617, asparagine 716, asparagine 760, asparagine 771, asparagine 782, and asparagine 867 are each glycosylated (N-linked (GlcNAc...) asparagine; by host). Fusion peptide regions lie at residues 885 to 906 and 904 to 926; these read STIE…MQGY and QGYD…AQYV. Cysteine 909 and cysteine 922 are disulfide-bonded. The segment at 991–1041 is heptad repeat 1; the sequence is QKIIANKFNQALGAMQTGFTTTNLAFNKVQDAVNANAMALSKLAAELSNTF. Residues 1020-1064 are a coiled coil; sequence QDAVNANAMALSKLAAELSNTFGAISSSISDILARLDTVEQEAQI. N-linked (GlcNAc...) asparagine; by host glycans are attached at residues asparagine 1145, asparagine 1172, asparagine 1214, asparagine 1226, asparagine 1242, asparagine 1257, asparagine 1278, and asparagine 1289. The interval 1247–1286 is heptad repeat 2; the sequence is GPNFQEISKINTTLLNLNTELMVLSEVVKQLNESYIDLKE. The stretch at 1259–1287 forms a coiled coil; the sequence is TLLNLNTELMVLSEVVKQLNESYIDLKEL. Residues 1298–1318 form a helical membrane-spanning segment; the sequence is WYIWLGFIAGLVALALCVFFI. The Cytoplasmic segment spans residues 1319–1352; that stretch reads LCCTGCGTSCLGKLKCNRCCDSYDEYEVEKIHVH. Residues 1350–1352 carry the KxHxx motif; the sequence is HVH.

The protein belongs to the betacoronaviruses spike protein family. As to quaternary structure, homotrimer; each monomer consists of a S1 and a S2 subunit. The resulting peplomers protrude from the virus surface as spikes. Post-translationally, specific enzymatic cleavages in vivo yield mature proteins. The precursor is processed into S1 and S2 by host cell furin or another cellular protease to yield the mature S1 and S2 proteins. Additionally, a second cleavage leads to the release of a fusion peptide after viral attachment to host cell receptor. The cytoplasmic Cys-rich domain is palmitoylated. Spike glycoprotein is digested within host endosomes.

The protein localises to the virion membrane. Its subcellular location is the host endoplasmic reticulum-Golgi intermediate compartment membrane. It localises to the host cell membrane. In terms of biological role, attaches the virion to the cell membrane by interacting with host receptor, initiating the infection. Functionally, mediates fusion of the virion and cellular membranes by acting as a class I viral fusion protein. Under the current model, the protein has at least three conformational states: pre-fusion native state, pre-hairpin intermediate state, and post-fusion hairpin state. During viral and target cell membrane fusion, the coiled coil regions (heptad repeats) assume a trimer-of-hairpins structure, positioning the fusion peptide in close proximity to the C-terminal region of the ectodomain. The formation of this structure appears to drive apposition and subsequent fusion of viral and target cell membranes. Its function is as follows. Acts as a viral fusion peptide which is unmasked following S2 cleavage occurring upon virus endocytosis. The polypeptide is Spike glycoprotein (Bat coronavirus HKU5 (BtCoV)).